The following is a 246-amino-acid chain: Probable transcriptional regulatory protein YebC (246 aa).

The segment at 1–20 (MAGHSKWANTRHRKAAQDAK) is disordered.

The protein belongs to the TACO1 family.

It localises to the cytoplasm. The sequence is that of Probable transcriptional regulatory protein YebC from Shigella dysenteriae serotype 1 (strain Sd197).